A 421-amino-acid polypeptide reads, in one-letter code: Cell division protein FtsA (421 aa).

This sequence belongs to the FtsA/MreB family. In terms of assembly, self-interacts. Interacts with FtsZ.

The protein localises to the cell membrane. Cell division protein that is involved in the assembly of the Z ring. May serve as a membrane anchor for the Z ring. The chain is Cell division protein FtsA from Buchnera aphidicola subsp. Baizongia pistaciae (strain Bp).